Consider the following 520-residue polypeptide: UvrABC system protein C (520 aa).

The GIY-YIG domain occupies 11-89; that stretch reads EEPGCYQFKD…IKKYQPKYNI (79 aa). The UVR domain occupies 195–230; that stretch reads QDLIYDLRKEMETFAAAEEYEKALVIRDRIAAIENL.

The protein belongs to the UvrC family. In terms of assembly, interacts with UvrB in an incision complex.

The protein resides in the cytoplasm. Functionally, the UvrABC repair system catalyzes the recognition and processing of DNA lesions. UvrC both incises the 5' and 3' sides of the lesion. The N-terminal half is responsible for the 3' incision and the C-terminal half is responsible for the 5' incision. This chain is UvrABC system protein C, found in Methanospirillum hungatei JF-1 (strain ATCC 27890 / DSM 864 / NBRC 100397 / JF-1).